The sequence spans 419 residues: Transcription termination factor Rho (419 aa).

The region spanning 48–123 (DIFGDGVLEI…LKVNKVNYDK (76 aa)) is the Rho RNA-BD domain. RNA-binding regions lie at residues 61–66 (GFGFLR), 78–80 (DIY), and 108–110 (ERY). ATP is bound by residues 169 to 174 (GRGQRG), 181 to 186 (KAGKTM), and Arg212. Positions 284-288 (VLTGG) are RNA-binding 2.

It belongs to the Rho family. Homohexamer. The homohexamer assembles into an open ring structure.

In terms of biological role, facilitates transcription termination by a mechanism that involves Rho binding to the nascent RNA, activation of Rho's RNA-dependent ATPase activity, and release of the mRNA from the DNA template. The chain is Transcription termination factor Rho from Buchnera aphidicola subsp. Baizongia pistaciae (strain Bp).